The sequence spans 194 residues: Glycerol-3-phosphate acyltransferase (194 aa).

6 consecutive transmembrane segments (helical) span residues 3 to 23 (AGLF…GLLL), 52 to 72 (VGIL…LLAW), 80 to 100 (MQAW…FLLF), 112 to 132 (VFLA…ILLV), 135 to 155 (WRYI…IIFF), and 162 to 182 (LLIA…SNIS).

The protein belongs to the PlsY family. Probably interacts with PlsX.

It localises to the cell inner membrane. It catalyses the reaction an acyl phosphate + sn-glycerol 3-phosphate = a 1-acyl-sn-glycero-3-phosphate + phosphate. It participates in lipid metabolism; phospholipid metabolism. In terms of biological role, catalyzes the transfer of an acyl group from acyl-phosphate (acyl-PO(4)) to glycerol-3-phosphate (G3P) to form lysophosphatidic acid (LPA). This enzyme utilizes acyl-phosphate as fatty acyl donor, but not acyl-CoA or acyl-ACP. The polypeptide is Glycerol-3-phosphate acyltransferase (Trichlorobacter lovleyi (strain ATCC BAA-1151 / DSM 17278 / SZ) (Geobacter lovleyi)).